We begin with the raw amino-acid sequence, 635 residues long: Rab11 family-interacting protein 4 (635 aa).

The 36-residue stretch at 49–84 folds into the EF-hand domain; it reads GQGEEVEKLVKCLDPNDLGRINFKDFCRGVFAMKGC. The Ca(2+) site is built by aspartate 62, asparagine 64, arginine 68, and aspartate 73. The tract at residues 82 to 635 is necessary for interaction with RAB11A, subcellular location, homo- or heterooligomerization; sequence KGCEELLKDV…HNPSILEIKH (554 aa). 2 disordered regions span residues 147-176 and 216-258; these read GPQE…EKEP and EDYG…QTPR. Over residues 216 to 225 the composition is skewed to acidic residues; the sequence is EDYGEGDDVD. The stretch at 279–615 forms a coiled coil; that stretch reads KINLLNDLEA…EEINFRLRQY (337 aa). The FIP-RBD domain occupies 572–634; it reads EAKNLFATQT…DHNPSILEIK (63 aa).

As to quaternary structure, homodimer. Forms a complex with Rab11 (RAB11A or RAB11B) and ARF6. Interacts with RAB11A; the interaction is direct. Forms a heterooligomeric complex with RAB11FIP2, RAB11FIP3 and RAB11FIP5. Interacts with ECPAS. In terms of tissue distribution, strongly expressed in the developing retina. Expressed predominantly in neural tissues.

It localises to the recycling endosome membrane. It is found in the cleavage furrow. The protein localises to the midbody. Its subcellular location is the cytoplasmic vesicle. In terms of biological role, acts as a regulator of endocytic traffic by participating in membrane delivery. Required for the abscission step in cytokinesis, possibly by acting as an 'address tag' delivering recycling endosome membranes to the cleavage furrow during late cytokinesis. May play a role in differentiation during retinal development, in a Rab11-independent manner. The sequence is that of Rab11 family-interacting protein 4 (Rab11fip4) from Mus musculus (Mouse).